Here is a 652-residue protein sequence, read N- to C-terminus: MSQTHKHAIPANIADRCLINPEQYETKYKQSINDPDTFWGEQGKILDWITPYQKVKNTSFAPGNVSIKWYEDGTLNLAANCLDRHLQENGDRTAIIWEGDDASQSKHISYRELHRDVCRFANTLLDLGIKKGDVVAIYMPMVPEAAVAMLACARIGAVHSVIFGGFSPEAIAGRIIDSSSRLVITADEGVRAGRSIPLKKNVDDALKNPNVTSVEHVIVLKRTGNDIDWQEGRDLWWRDLIEKASPEHQPEAMNAEDPLFILYTSGSTGKPKGVLHTTGGYLVYAATTFKYVFDYHPGDIYWCTADVGWVTGHSYLLYGPLACGATTLMFEGVPNWPTPARMCQVVDKHQVNILYTAPTAIRALMAEGDKAIEGTDRSSLRILGSVGEPINPEAWEWYWKKIGKEKCPVVDTWWQTETGGFMITPLPGAIELKAGSATRPFFGVQPALVDNEGHPQEGATEGNLVITDSWPGQARTLFGDHERFEQTYFSTFKNMYFSGDGARRDEDGYYWITGRVDDVLNVSGHRLGTAEIESALVAHPKIAEAAVVGIPHAIKGQAIYAYVTLNHGEEPSPELYAEVRNWVRKEIGPLATPDVLHWTDSLPKTRSGKIMRRILRKIAAGDTSNLGDTSTLADPGVVEKLLEEKQAIAMPS.

CoA-binding positions include 191-194, T311, and N335; that span reads RAGR. ATP is bound by residues 387–389, 411–416, D500, and R515; these read GEP and DTWWQT. Position 523 (S523) interacts with CoA. R526 lines the ATP pocket. Residues V537, H539, and I542 each coordinate Mg(2+). R584 serves as a coordination point for CoA. K609 is modified (N6-acetyllysine).

This sequence belongs to the ATP-dependent AMP-binding enzyme family. It depends on Mg(2+) as a cofactor. Post-translationally, acetylated. Deacetylation by the SIR2-homolog deacetylase activates the enzyme.

The catalysed reaction is acetate + ATP + CoA = acetyl-CoA + AMP + diphosphate. Catalyzes the conversion of acetate into acetyl-CoA (AcCoA), an essential intermediate at the junction of anabolic and catabolic pathways. Acs undergoes a two-step reaction. In the first half reaction, Acs combines acetate with ATP to form acetyl-adenylate (AcAMP) intermediate. In the second half reaction, it can then transfer the acetyl group from AcAMP to the sulfhydryl group of CoA, forming the product AcCoA. Functionally, enables the cell to use acetate during aerobic growth to generate energy via the TCA cycle, and biosynthetic compounds via the glyoxylate shunt. Acetylates CheY, the response regulator involved in flagellar movement and chemotaxis. This chain is Acetyl-coenzyme A synthetase, found in Salmonella typhi.